The primary structure comprises 213 residues: Histone H1.3 (213 aa).

N-acetylserine is present on serine 1. The span at 1–15 shows a compositional bias: low complexity; that stretch reads SEAPAETAAPAPAEK. The segment at 1–41 is disordered; the sequence is SEAPAETAAPAPAEKSPAKKKKAAKKPGAGAAKRKAAGPPV. Residue lysine 15 is modified to N6-acetyllysine. N6-(beta-hydroxybutyryl)lysine occurs at positions 35 and 53. The region spanning 37 to 110 is the H15 domain; sequence AGPPVSELIT…GASGSFKLDK (74 aa). Residue arginine 55 is modified to Citrulline. An N6-(beta-hydroxybutyryl)lysine mark is found at lysine 65, lysine 86, and lysine 91. The segment at 92–213 is disordered; it reads GTLVETKGTG…AKKTAAKKKK (122 aa). Serine 105 carries the phosphoserine modification. Lysine 107 carries the N6-(beta-hydroxybutyryl)lysine modification. Positions 107–119 are enriched in basic and acidic residues; that stretch reads KLDKKAASGEAKP. 3 stretches are compositionally biased toward basic residues: residues 120-131, 138-170, and 179-213; these read KPKKAGAAKPKK, KKPK…KVAK, and KSPK…KKKK.

This sequence belongs to the histone H1/H5 family. Post-translationally, H1 histones are progressively phosphorylated during the cell cycle, becoming maximally phosphorylated during late G2 phase and M phase, and being dephosphorylated sharply thereafter. In terms of processing, citrullination at Arg-55 (H1R54ci) by PADI4 takes place within the DNA-binding site of H1 and results in its displacement from chromatin and global chromatin decondensation, thereby promoting pluripotency and stem cell maintenance.

It localises to the nucleus. The protein localises to the chromosome. Its function is as follows. Histones H1 are necessary for the condensation of nucleosome chains into higher-order structures. This is Histone H1.3 from Oryctolagus cuniculus (Rabbit).